The chain runs to 206 residues: Recombination protein RecR (206 aa).

The C4-type zinc finger occupies 58-73; sequence CNICGYITEKNICNFC. In terms of domain architecture, Toprim spans 81-178; it reads STIMIVADNR…KITKLAYGIP (98 aa).

It belongs to the RecR family.

Its function is as follows. May play a role in DNA repair. It seems to be involved in an RecBC-independent recombinational process of DNA repair. It may act with RecF and RecO. The protein is Recombination protein RecR of Phytoplasma mali (strain AT).